Consider the following 1187-residue polypeptide: ATP-dependent DNA helicase MER3 (1187 aa).

Positions 1-41 (MKTKFDRLGTGKRSRPSPNNIDFNDQSATFKRNKKNSRQPS) are disordered. A compositionally biased stretch (polar residues) spans 16–30 (PSPNNIDFNDQSATF). In terms of domain architecture, Helicase ATP-binding spans 148–322 (PSIYESNENC…WLKTNNELPA (175 aa)). 161–168 (SPTGSGKT) lines the ATP pocket. The DEIH box signature appears at 268–271 (DEIH). The Helicase C-terminal domain occupies 360-542 (KLIEIIEKHA…NLIEHLAAET (183 aa)). An SEC63 domain is found at 616-922 (STAYGNAMTR…PKLEKIEFSI (307 aa)). The segment at 1039–1054 (CFHSCKDKTQCRHLCC) adopts a C4-type zinc-finger fold. Residues 1146 to 1187 (NCPEIIPIDLESSDSYSSNTAASSISDPNGDLDFLGSDIEFE) form a disordered region. The span at 1158-1171 (SDSYSSNTAASSIS) shows a compositional bias: low complexity.

It belongs to the helicase family. SKI2 subfamily. In terms of assembly, oligomerizes. The cofactor is a divalent metal cation. Requires Zn(2+) as cofactor.

It localises to the nucleus. It carries out the reaction Couples ATP hydrolysis with the unwinding of duplex DNA by translocating in the 3'-5' direction.. The enzyme catalyses ATP + H2O = ADP + phosphate + H(+). In terms of biological role, DNA-dependent ATPase and 3'-5' DNA helicase. Required in the control of double strand break transition and crossover during meiosis. ATPase is slightly better stimulated by single-stranded (ss) than double-stranded (ds)DNA. Unwinds Holliday junction (HJ) DNA to Y-DNA and to ssDNA. Efficient unwinding requires 6 nucleotides of 3'-ssDNA; seems to initiate unwinding from blunt ends when they open slightly. Binds HJ, dsDNA, ssDNA and 3'- and 5-overhang DNA. The sequence is that of ATP-dependent DNA helicase MER3 from Saccharomyces cerevisiae (strain ATCC 204508 / S288c) (Baker's yeast).